The sequence spans 427 residues: Zinc finger protein 134 (427 aa).

K20 participates in a covalent cross-link: Glycyl lysine isopeptide (Lys-Gly) (interchain with G-Cter in SUMO2). The C2H2-type 1 zinc finger occupies 50–72; it reads LPCDICGPILKDILHLDEHQGTH. Residues 78 to 100 form a C2H2-type 2; degenerate zinc finger; it reads HTCGACGRQFWFSANLHQYQKCY. Glycyl lysine isopeptide (Lys-Gly) (interchain with G-Cter in SUMO2) cross-links involve residues K135 and K139. 9 consecutive C2H2-type zinc fingers follow at residues 176–198, 204–226, 232–254, 260–282, 288–310, 316–338, 344–366, 372–394, and 400–422; these read YKCSECGKAFSRKDTLVQHQRIH, YECSECGKAFSRKATLVQHQRIH, YECSECGKTFSRKDNLTQHKRIH, YKCNECGKYFSHHSNLIVHQRVH, YKCSDCGKVFRHKSTLVQHESIH, YDCSDCGKSFGHKYTLIKHQRIH, FECIECGKFFSRSSDYIAHQRVH, FVCSKCGKDFIRTSHLVRHQRVH, and YECSECGKAYSLSSHLNRHQKVH.

It belongs to the krueppel C2H2-type zinc-finger protein family.

The protein resides in the nucleus. In terms of biological role, may be involved in transcriptional regulation. This is Zinc finger protein 134 (ZNF134) from Homo sapiens (Human).